The primary structure comprises 413 residues: Glucose-1-phosphatase (413 aa).

Residues 1–22 (MKKSLLAVAVAGAVLLSSAVQA) form the signal peptide. Position 39 (Arg-39) interacts with substrate. His-40 serves as the catalytic Nucleophile. Substrate contacts are provided by Arg-43, Arg-116, and Glu-218. The Proton donor role is filled by Asp-312.

It belongs to the histidine acid phosphatase family. In terms of assembly, homodimer.

It localises to the periplasm. The enzyme catalyses alpha-D-glucose 1-phosphate + H2O = D-glucose + phosphate. This is Glucose-1-phosphatase (agp) from Salmonella typhimurium (strain LT2 / SGSC1412 / ATCC 700720).